Reading from the N-terminus, the 432-residue chain is MLLWFLSLVCSGFFLVQRMSAHVGSHDKPFLSAWPSYVVPLGQNVTLTCDSHRGSNIFKLYKEEGSPNHQLHETTFQKSQVFGPVTTEHAGTYRCFHPQYANVLSAHSEPLKIIISGIYMKPFLLILQSPLVDTGGNVTLECHSENMFDTYILISHRMGIIKNSVQVSAEHHESGSHVTYSIGPMTPDLVGTYTCYGANSYYPYEWSDSSDPIDIKITGVYKKPSLSALMGPVLMMSGETMALSCISDHQFDTFHMSREGVPRGQGMPAVQSHSGKFEAKFLLSPMIQKGNYRCYGSFRNASHVWSSPSDPLYLPAKGNCPAYTEADTKTNNYKNLHILTGLLVTMVLVVIIIFYSCYFSKQNKSQKQAAASMEQEYEVKNTINTQNFEGQERQEVTYTELEQRIFNQNLMPPISRISEFSADTIVYMEIMK.

A signal peptide spans 1–21 (MLLWFLSLVCSGFFLVQRMSA). The Extracellular segment spans residues 22–335 (HVGSHDKPFL…ADTKTNNYKN (314 aa)). 3 Ig-like C2-type domains span residues 42-100 (GQNV…HPQY), 135-202 (GGNV…NSYY), and 238-301 (GETM…FRNA). A glycan (N-linked (GlcNAc...) asparagine) is linked at Asn-44. The cysteines at positions 49 and 95 are disulfide-linked. Asn-137 carries an N-linked (GlcNAc...) asparagine glycan. 2 cysteine pairs are disulfide-bonded: Cys-142/Cys-195 and Cys-245/Cys-294. Asn-300 is a glycosylation site (N-linked (GlcNAc...) asparagine). Residues 336–356 (LHILTGLLVTMVLVVIIIFYS) form a helical membrane-spanning segment. Over 357-432 (CYFSKQNKSQ…DTIVYMEIMK (76 aa)) the chain is Cytoplasmic.

The protein belongs to the immunoglobulin superfamily.

The protein localises to the cell membrane. Functionally, receptor on natural killer (NK) cells. Inhibits the activity of NK cells thus preventing cell lysis. The polypeptide is Killer cell immunoglobulin-like receptor 3DL1 (Kir3dl1) (Mus musculus (Mouse)).